Reading from the N-terminus, the 80-residue chain is RNA-binding protein Hfq (80 aa).

The region spanning 10 to 69 is the Sm domain; it reads DPFLNVLRKEHIPVSIYLVNGIKLQGHIDSFDQYVVLLRNSVTQMVYKHAISTIVPGKAV.

The protein belongs to the Hfq family. Homohexamer.

RNA chaperone that binds small regulatory RNA (sRNAs) and mRNAs to facilitate mRNA translational regulation in response to envelope stress, environmental stress and changes in metabolite concentrations. Also binds with high specificity to tRNAs. The protein is RNA-binding protein Hfq of Nitrosomonas eutropha (strain DSM 101675 / C91 / Nm57).